We begin with the raw amino-acid sequence, 377 residues long: 23S rRNA (uracil(747)-C(5))-methyltransferase RlmC (377 aa).

Residues Cys-3, Cys-11, Cys-14, and Cys-87 each coordinate [4Fe-4S] cluster. Residues Gln-212, Phe-241, Glu-262, and Asn-307 each coordinate S-adenosyl-L-methionine. Residue Cys-334 is the Nucleophile of the active site.

Belongs to the class I-like SAM-binding methyltransferase superfamily. RNA M5U methyltransferase family. RlmC subfamily.

The enzyme catalyses uridine(747) in 23S rRNA + S-adenosyl-L-methionine = 5-methyluridine(747) in 23S rRNA + S-adenosyl-L-homocysteine + H(+). Functionally, catalyzes the formation of 5-methyl-uridine at position 747 (m5U747) in 23S rRNA. The protein is 23S rRNA (uracil(747)-C(5))-methyltransferase RlmC of Edwardsiella ictaluri (strain 93-146).